The primary structure comprises 73 residues: Putative membrane protein insertion efficiency factor (73 aa).

It belongs to the UPF0161 family.

The protein localises to the cell inner membrane. In terms of biological role, could be involved in insertion of integral membrane proteins into the membrane. The sequence is that of Putative membrane protein insertion efficiency factor from Rickettsia bellii (strain OSU 85-389).